Consider the following 449-residue polypeptide: Protein tweety homolog 1 (449 aa).

The Extracellular portion of the chain corresponds to 1–43; it reads MSSSHGYRASWWTYILHQVPHTNFQFEVVDNQFAPQEWPYQQA. Residues 44–64 form a helical membrane-spanning segment; it reads LLFLASIAGLCLAISLILICV. The Cytoplasmic segment spans residues 65–86; sequence YLIRFCCCSSQEDDDSKSHRVC. Residues 87–107 traverse the membrane as a helical segment; the sequence is CVTWSCVAAVIICCAGIGIGF. Over 108-212 the chain is Extracellular; that stretch reads YGNSETNDGV…QVNFIEDYRW (105 aa). N-linked (GlcNAc...) asparagine glycosylation is present at Asn-128. The chain crosses the membrane as a helical span at residues 213-233; that stretch reads LAYILLLLLDLIICLFTLLGL. Residues 234 to 238 are Cytoplasmic-facing; that stretch reads AKQIK. Residues 239-259 traverse the membrane as a helical segment; that stretch reads WLVIVMTVVSFFVLLLSWGSM. The Extracellular segment spans residues 260 to 388; that stretch reads GLEMATAVGL…LKGLCYDGME (129 aa). 2 disulfide bridges follow: Cys-273–Cys-383 and Cys-301–Cys-368. Residues Asn-282 and Asn-353 are each glycosylated (N-linked (GlcNAc...) asparagine). A helical transmembrane segment spans residues 389 to 409; sequence GILFLLLFSFLSALSFTAAIC. Residues 410–449 lie on the Cytoplasmic side of the membrane; that stretch reads SLPRAWKRFQNRDLDYDDMDEDDPFNPQESKRFVQWQSSI.

Belongs to the tweety family. As to quaternary structure, homotetramer; disulfide-linked. Homodimer.

The protein localises to the cell membrane. It catalyses the reaction chloride(in) = chloride(out). It carries out the reaction L-glutamate(out) = L-glutamate(in). In terms of biological role, may act as a calcium-independent, swelling-dependent volume-regulated anion channel (VRAC-swell) which plays a pivotal role in the process of regulatory volume decrease (RVD) in the brain through the efflux of anions like chloride and organic osmolytes like glutamate. In Xenopus tropicalis (Western clawed frog), this protein is Protein tweety homolog 1 (ttyh1).